The primary structure comprises 423 residues: COP9 signalosome complex subunit 3 (423 aa).

The 169-residue stretch at Asn-197 to Glu-365 folds into the PCI domain. Residues Pro-401 to Ser-410 show a composition bias toward polar residues. The segment at Pro-401–Ser-423 is disordered.

Belongs to the CSN3 family. Component of the CSN complex, probably composed of cops1, cops2, cops3, cops4, cops5, cops6, cops7, cops8 and cops9.

The protein localises to the cytoplasm. It is found in the nucleus. Functionally, component of the COP9 signalosome complex (CSN), a complex involved in various cellular and developmental processes. The CSN complex is an essential regulator of the ubiquitin (Ubl) conjugation pathway by mediating the deneddylation of the cullin subunits of E3 ligase complexes, leading to modify the Ubl ligase activity. The protein is COP9 signalosome complex subunit 3 (cops3) of Xenopus laevis (African clawed frog).